We begin with the raw amino-acid sequence, 217 residues long: Large ribosomal subunit protein bL25 (217 aa).

A compositionally biased stretch (low complexity) spans 195–211; sequence PAEGAAAAPAKGAAKGA. The tract at residues 195 to 217 is disordered; sequence PAEGAAAAPAKGAAKGAAKGGKK.

Belongs to the bacterial ribosomal protein bL25 family. CTC subfamily. In terms of assembly, part of the 50S ribosomal subunit; part of the 5S rRNA/L5/L18/L25 subcomplex. Contacts the 5S rRNA. Binds to the 5S rRNA independently of L5 and L18.

In terms of biological role, this is one of the proteins that binds to the 5S RNA in the ribosome where it forms part of the central protuberance. The protein is Large ribosomal subunit protein bL25 of Acidiphilium cryptum (strain JF-5).